Reading from the N-terminus, the 678-residue chain is ATP-dependent RNA helicase DHX58 (678 aa).

The region spanning 11 to 188 (ILPALEGKNI…QGAIDHILQL (178 aa)) is the Helicase ATP-binding domain. Residue 24-31 (LPTGAGKT) participates in ATP binding. The short motif at 131 to 134 (DECH) is the DECH box element. Residues 353 to 514 (MLERILLKQF…KAVAAVQKMD (162 aa)) form the Helicase C-terminal domain. Positions 489–546 (EMKRELTNEALEVLMEKAVAAVQKMDPDEFKAKIRDLQQASLVKRAARAAHREIQQGQ) form a coiled coil. Residues 542–669 (IQQGQFLPEH…PVFDILQDCT (128 aa)) form the RLR CTR domain. Cys556, Cys559, Cys612, and Cys615 together coordinate Zn(2+). The interval 572-655 (VEGTHHVNVN…KIQAKKWSRV (84 aa)) is RNA-binding.

This sequence belongs to the helicase family. RLR subfamily. As to quaternary structure, monomer in the absence of dsRNA. Homodimer in the presence of dsRNA. Interacts with RIGI (via CARD domain), MAVS/IPS1 and DDX60. Found in a complex with RIGI and IFIH1/MDA5. Interacts with ANKRD17. Directly interacts with ATG5 and ATG12, either as ATG5 and ATG12 monomers or as ATG12-ATG5 conjugates. In terms of tissue distribution, highly expressed in mammary tissues. Expressed in liver and testis. Expressed at lower level in spleen, embryo, mammary gland and breast tumors.

It localises to the cytoplasm. It catalyses the reaction ATP + H2O = ADP + phosphate + H(+). Acts as a regulator of RIGI and IFIH1/MDA5 mediated antiviral signaling. Cannot initiate antiviral signaling as it lacks the CARD domain required for activating MAVS/IPS1-dependent signaling events. Can have both negative and positive regulatory functions related to RIGI and IFIH1/MDA5 signaling and this role in regulating signaling may be complex and could probably depend on characteristics of the infecting virus or target cells, or both. Its inhibitory action on RIG-I signaling may involve the following mechanisms: competition with RIGI for binding to the viral RNA, binding to RIGI and inhibiting its dimerization and interaction with MAVS/IPS1, competing with IKBKE in its binding to MAVS/IPS1 thereby inhibiting activation of interferon regulatory factor 3 (IRF3). Its positive regulatory role may involve unwinding or stripping nucleoproteins of viral RNA thereby facilitating their recognition by RIGI and IFIH1/MDA5. Involved in the innate immune response to various RNA viruses and some DNA viruses such as poxviruses, and also to the bacterial pathogen Listeria monocytogenes. Can bind both ssRNA and dsRNA, with a higher affinity for dsRNA. Shows a preference to 5'-triphosphorylated RNA, although it can recognize RNA lacking a 5'-triphosphate. The protein is ATP-dependent RNA helicase DHX58 of Mus musculus (Mouse).